Consider the following 495-residue polypeptide: Putative aldehyde dehydrogenase DhaS (495 aa).

244 to 249 (GSTEIG) provides a ligand contact to NAD(+). Active-site residues include Glu-266 and Cys-300.

The protein belongs to the aldehyde dehydrogenase family.

It catalyses the reaction an aldehyde + NAD(+) + H2O = a carboxylate + NADH + 2 H(+). The polypeptide is Putative aldehyde dehydrogenase DhaS (dhaS) (Bacillus subtilis (strain 168)).